A 179-amino-acid polypeptide reads, in one-letter code: Fas apoptotic inhibitory molecule 1 (179 aa).

Threonine 2 is modified (N-acetylthreonine).

The protein belongs to the FAIM1 family.

The protein localises to the cytoplasm. In terms of biological role, plays a role as an inducible effector molecule that mediates Fas resistance produced by surface Ig engagement in B cells. This is Fas apoptotic inhibitory molecule 1 (FAIM) from Homo sapiens (Human).